We begin with the raw amino-acid sequence, 190 residues long: Somatotropin (190 aa).

H19 is a binding site for Zn(2+). An intrachain disulfide couples C52 to C163. E172 lines the Zn(2+) pocket. Residues C180 and C188 are joined by a disulfide bond.

The protein belongs to the somatotropin/prolactin family.

It localises to the secreted. Its function is as follows. Growth hormone plays an important role in growth control and involved in the regulation of several anabolic processes. This is Somatotropin (GH) from Crocodylus novaeguineae (Crocodile).